We begin with the raw amino-acid sequence, 61 residues long: Fasciculin-2 (61 aa).

4 disulfides stabilise this stretch: cysteine 3–cysteine 22, cysteine 17–cysteine 39, cysteine 41–cysteine 52, and cysteine 53–cysteine 59.

It belongs to the three-finger toxin family. Short-chain subfamily. Acn-esterase inhibitor sub-subfamily. Expressed by the venom gland.

It is found in the secreted. Functionally, interferes with neuromuscular transmission by inhibiting the enzyme acetylcholinesterase (AChE) present at the neuromuscular junction. It selectively binds and inhibits with a 1:1 stoichiometry the mammalian and electric fish AChE at picomolar concentrations. It is highly specific for the peripheral site of AChE and blocks the entry of acetylcholine into the active site of the enzyme (through the Met-33 residue), thereby preventing its breakdown. It has been called fasciculin since after injection into mice it causes severe, generalized and long-lasting (5-7 hours) fasciculations. This chain is Fasciculin-2, found in Dendroaspis angusticeps (Eastern green mamba).